A 367-amino-acid polypeptide reads, in one-letter code: Glutamate 5-kinase (367 aa).

ATP is bound at residue lysine 10. Substrate is bound by residues serine 50, aspartate 137, and asparagine 149. Residues 169-170 (TD) and 211-217 (TGGMGTK) contribute to the ATP site. In terms of domain architecture, PUA spans 275-353 (AGEITVDDGA…QEISEILGYE (79 aa)).

Belongs to the glutamate 5-kinase family.

It localises to the cytoplasm. The catalysed reaction is L-glutamate + ATP = L-glutamyl 5-phosphate + ADP. It participates in amino-acid biosynthesis; L-proline biosynthesis; L-glutamate 5-semialdehyde from L-glutamate: step 1/2. Catalyzes the transfer of a phosphate group to glutamate to form L-glutamate 5-phosphate. This chain is Glutamate 5-kinase, found in Serratia proteamaculans (strain 568).